Here is a 1237-residue protein sequence, read N- to C-terminus: Glutamate receptor ionotropic, NMDA 2C (1237 aa).

The signal sequence occupies residues 1 to 19 (MGGALGPALLLTSLLGAWA). At 20–554 (RLGAGQGEQA…SAFLEPYSPA (535 aa)) the chain is on the extracellular side. Asparagine 70 and asparagine 73 each carry an N-linked (GlcNAc...) asparagine glycan. A disulfide bridge connects residues cysteine 82 and cysteine 317. Asparagine 337 and asparagine 438 each carry an N-linked (GlcNAc...) asparagine glycan. 2 disulfides stabilise this stretch: cysteine 426–cysteine 453 and cysteine 433–cysteine 454. Residues serine 509, threonine 511, and arginine 516 each coordinate L-glutamate. N-linked (GlcNAc...) asparagine glycosylation occurs at asparagine 539. The chain crosses the membrane as a helical span at residues 555 to 575 (VWVMMFVMCLTVVAITVFMFE). Residues 576 to 601 (YFSPVSYNQNLTKGKKPGGPSFTIGK) lie on the Cytoplasmic side of the membrane. The segment at 601 to 620 (KSVWLLWALVFNNSVPIENP) is pore-forming. The segment at residues 602–611 (SVWLLWALVF) is an intramembrane region (discontinuously helical). Residues 612 to 622 (NNSVPIENPRG) are Cytoplasmic-facing. The helical transmembrane segment at 623–644 (TTSKIMVLVWAFFAVIFLASYT) threads the bilayer. Topologically, residues 645–813 (ANLAAFMIQE…EVMSSKLDID (169 aa)) are extracellular. N-linked (GlcNAc...) asparagine glycosylation is present at asparagine 685. Positions 687, 688, and 729 each coordinate L-glutamate. Cysteine 743 and cysteine 798 are disulfide-bonded. A helical transmembrane segment spans residues 814 to 833 (NMAGVFYMLLVAMGLALLVF). Topologically, residues 834–1237 (AWEHLVYWKL…RRVSSLESEV (404 aa)) are cytoplasmic. Residues serine 875, serine 881, and serine 912 each carry the phosphoserine modification. A compositionally biased stretch (polar residues) spans 907–925 (ADVSSSLDRATRTIENWGN). The segment at 907 to 990 (ADVSSSLDRA…LPDVSRPSCR (84 aa)) is disordered. Low complexity predominate over residues 930–941 (PAPTASGPRSST). A compositionally biased stretch (pro residues) spans 968 to 982 (PQPPARPATCGPPLP). The short motif at 1235–1237 (SEV) is the PDZ-binding element.

This sequence belongs to the glutamate-gated ion channel (TC 1.A.10.1) family. NR2C/GRIN2C subfamily. As to quaternary structure, heterotetramer. Forms heterotetrameric channels composed of two GluN1/zeta subunits (GRIN1), and two identical GluN2/epsilon subunits (GRIN2A, GRIN2B, GRIN2C or GRIN2D) or GluN3 subunits (GRIN3A or GRIN3B) (in vitro). In vivo, the subunit composition may depend on the expression levels of the different subunits. Interacts with PDZ domains of PATJ and DLG4. Interacts (via PDZ-binding motif) with SNX27 (via PDZ domain); the interaction is required for recycling to the plasma membrane when endocytosed and prevent degradation in lysosomes. In terms of tissue distribution, detected in cerebellum.

Its subcellular location is the cell membrane. The protein resides in the postsynaptic cell membrane. It catalyses the reaction Ca(2+)(in) = Ca(2+)(out). The catalysed reaction is Na(+)(in) = Na(+)(out). The enzyme catalyses K(+)(in) = K(+)(out). In terms of biological role, component of N-methyl-D-aspartate (NMDA) receptors (NMDARs) that function as heterotetrameric, ligand-gated cation channels with high calcium permeability and voltage-dependent block by Mg(2+). Participates in synaptic plasticity for learning and memory formation by contributing to the slow phase of excitatory postsynaptic current and long-term synaptic potentiation. Channel activation requires binding of the neurotransmitter L-glutamate to the GluN2 subunit, glycine or D-serine binding to the GluN1 subunit, plus membrane depolarization to eliminate channel inhibition by Mg(2+). NMDARs mediate simultaneously the potasium efflux and the influx of calcium and sodium. Each GluN2 subunit confers differential attributes to channel properties, including activation, deactivation and desensitization kinetics, pH sensitivity, Ca2(+) permeability, and binding to allosteric modulators. This Rattus norvegicus (Rat) protein is Glutamate receptor ionotropic, NMDA 2C.